Reading from the N-terminus, the 104-residue chain is N(4)-acetylcytidine amidohydrolase (104 aa).

In terms of domain architecture, ASCH spans 6–102 (TFYTRFQQDI…ELYVIAFKKV (97 aa)). Residue Lys20 is the Proton acceptor of the active site. Catalysis depends on Thr23, which acts as the Nucleophile. Glu73 serves as the catalytic Proton donor.

It belongs to the N(4)-acetylcytidine amidohydrolase family.

The enzyme catalyses N(4)-acetylcytidine + H2O = cytidine + acetate + H(+). The catalysed reaction is N(4)-acetyl-2'-deoxycytidine + H2O = 2'-deoxycytidine + acetate + H(+). It catalyses the reaction N(4)-acetylcytosine + H2O = cytosine + acetate + H(+). In terms of biological role, catalyzes the hydrolysis of N(4)-acetylcytidine (ac4C). The polypeptide is N(4)-acetylcytidine amidohydrolase (Cronobacter sakazakii (strain ATCC BAA-894) (Enterobacter sakazakii)).